We begin with the raw amino-acid sequence, 87 residues long: Kappa-3-bungarotoxin (87 aa).

The first 21 residues, 1-21 (MKTLLLSLVVVTIVCLDLGYT), serve as a signal peptide directing secretion. 5 cysteine pairs are disulfide-bonded: Cys-24-Cys-42, Cys-35-Cys-63, Cys-48-Cys-52, Cys-67-Cys-79, and Cys-80-Cys-85.

The protein belongs to the three-finger toxin family. Long-chain subfamily. Kappa-neurotoxin sub-subfamily. As to quaternary structure, homodimer and heterodimer with kappa 2-bungarotoxin; non-covalently-linked. As to expression, expressed by the venom gland.

The protein localises to the secreted. Its function is as follows. Postsynaptic neurotoxin that binds and inhibits neuronal nicotinic acetylcholine receptors (nAChR) with high affinity (IC(50)&lt;100 nM). Is a selective, and slowly reversible antagonist of alpha-3/CHRNA3-containing and some alpha-4/CHRNA4-containing AChRs. This chain is Kappa-3-bungarotoxin, found in Bungarus multicinctus (Many-banded krait).